Consider the following 722-residue polypeptide: MQQRHLSQSAHSHGHGTRRAHRRNTIAIAVATLAVAACGGFGTNGSGGNTGPNVKPAFISGPVGVKSYDGNTDDLLTAGLGKDGLAAAAPAFANPNAPTAVELRRNAIWANYRAIVDVQAAGGYGSLYGPNVDAKGNVTTGQGKVPGTEYIAFTDDGSGRQNVTVMAQVPDGFDVKHPCIISATSSGSRGVYGGIAVGEWGLKHNCAVAYTDKGTGAAPHDLGSDTVPLIDGTRQTRAGAGTQAQFAAQPGASETLAGFNSSTPHRLAFKHAHSQQNPEANWGANTLQAIQFTLWAVNDKFGRTNTDGMRQATFTPANVLVIASAISNGGGAAIAAAEQDTGGLIDGVAVGEPNVNLPPTAGVVVKRGGVPVAASGKHLYDYTTIANLYQLCASQDASLGNAPFAKTAGQAALNRCASLAAKKMIAGGSTSAQATSALDALHRAGWEPESDDLFASLSALEVGSSISVTYANAYARASVTDRLCHYSFSSPGSPPQANPVTAPAAALAGLFSTGNGIPPTTAVTLMNDANPSGAMRDFTSISPSTKLADGNVDGALCLRGLLDTRNPALMTGIGQTYRTGNLGGRPSVIVQGRSDGLLPVNHTSRPYLGLNKHVEGASSRLSYIEVTNGQHFDGFIDVIPGYAKRYIPMHVYVNRALDAVYANLRDGTPLPPSQVVRTTPRGGADTDTVGPRIQPSNVPPIAATPAAGDAITVTGSTVDVPN.

The segment covering 1–11 (MQQRHLSQSAH) has biased composition (polar residues). A disordered region spans residues 1-20 (MQQRHLSQSAHSHGHGTRRA). An N-terminal signal peptide occupies residues 1–36 (MQQRHLSQSAHSHGHGTRRAHRRNTIAIAVATLAVA). Residue serine 327 is the Charge relay system of the active site. The segment at 671–697 (PPSQVVRTTPRGGADTDTVGPRIQPSN) is disordered.

The protein belongs to the D-(-)-3-hydroxybutyrate oligomer hydrolase family.

The protein localises to the secreted. The catalysed reaction is (3R)-hydroxybutanoate dimer + H2O = 2 (R)-3-hydroxybutanoate + H(+). It functions in the pathway lipid metabolism; butanoate metabolism. In terms of biological role, participates in the degradation of poly-3-hydroxybutyrate (PHB). It works downstream of poly(3-hydroxybutyrate) depolymerase, hydrolyzing D(-)-3-hydroxybutyrate oligomers of various length (3HB-oligomers) into 3HB-monomers. The protein is D-(-)-3-hydroxybutyrate oligomer hydrolase of Cupriavidus metallidurans (strain ATCC 43123 / DSM 2839 / NBRC 102507 / CH34) (Ralstonia metallidurans).